The following is a 453-amino-acid chain: Glutamyl-tRNA(Gln) amidotransferase subunit A (453 aa).

Catalysis depends on charge relay system residues Lys56 and Ser131. The Acyl-ester intermediate role is filled by Ser155.

It belongs to the amidase family. GatA subfamily. Heterotrimer of A, B and C subunits.

The enzyme catalyses L-glutamyl-tRNA(Gln) + L-glutamine + ATP + H2O = L-glutaminyl-tRNA(Gln) + L-glutamate + ADP + phosphate + H(+). In terms of biological role, allows the formation of correctly charged Gln-tRNA(Gln) through the transamidation of misacylated Glu-tRNA(Gln) in organisms which lack glutaminyl-tRNA synthetase. The reaction takes place in the presence of glutamine and ATP through an activated gamma-phospho-Glu-tRNA(Gln). In Campylobacter jejuni subsp. doylei (strain ATCC BAA-1458 / RM4099 / 269.97), this protein is Glutamyl-tRNA(Gln) amidotransferase subunit A.